A 60-amino-acid polypeptide reads, in one-letter code: Large ribosomal subunit protein uL30 (60 aa).

It belongs to the universal ribosomal protein uL30 family. In terms of assembly, part of the 50S ribosomal subunit.

In Dehalococcoides mccartyi (strain ATCC BAA-2100 / JCM 16839 / KCTC 5957 / BAV1), this protein is Large ribosomal subunit protein uL30.